Consider the following 146-residue polypeptide: MMWQKYAGSRRSMPLGARILFHGVFYAGGFAIVYYLIQKFHSRALYYKLAVEQLQSHPEAQEALGPPLNIHYLKLIDRENFVDIVDAKLKIPVSGSKSEGLLYVHSSRGGPFQRWHLDEVFLELKDGQQIPVFKLSGENGDEVKKE.

Residues 1–14 are Mitochondrial matrix-facing; it reads MMWQKYAGSRRSMP. Residues 15-37 form a helical membrane-spanning segment; the sequence is LGARILFHGVFYAGGFAIVYYLI. Residues 38-146 are Mitochondrial intermembrane-facing; that stretch reads QKFHSRALYY…GENGDEVKKE (109 aa).

This sequence belongs to the COA1 family. In terms of assembly, component of the MITRAC (mitochondrial translation regulation assembly intermediate of cytochrome c oxidase complex) complex, the core components of this complex being COA3/MITRAC12 and COX14. Interacts with COX17 and COA6. Part of the mitochondrial complex I assembly/MCIA complex that comprises at least the core subunits TMEM126B, NDUFAF1, ECSIT and ACAD9 and complement subunits such as COA1 and TMEM186.

It is found in the mitochondrion inner membrane. Its function is as follows. Component of the MITRAC (mitochondrial translation regulation assembly intermediate of cytochrome c oxidase complex) complex, that regulates cytochrome c oxidase assembly. MITRAC complexes regulate both translation of mitochondrial encoded components and assembly of nuclear-encoded components imported in mitochondrion. Required for assembly of mitochondrial respiratory chain complex I and complex IV. As part of the MCIA complex, required for efficient assembly of the mitochondrial complex I. The polypeptide is Cytochrome c oxidase assembly factor 1 homolog (Homo sapiens (Human)).